A 137-amino-acid chain; its full sequence is Phosphoribosyl-AMP cyclohydrolase (137 aa).

Asp84 contributes to the Mg(2+) binding site. Residue Cys85 participates in Zn(2+) binding. Positions 86 and 88 each coordinate Mg(2+). The Zn(2+) site is built by Cys101 and Cys108.

This sequence belongs to the PRA-CH family. As to quaternary structure, homodimer. It depends on Mg(2+) as a cofactor. The cofactor is Zn(2+).

Its subcellular location is the cytoplasm. The catalysed reaction is 1-(5-phospho-beta-D-ribosyl)-5'-AMP + H2O = 1-(5-phospho-beta-D-ribosyl)-5-[(5-phospho-beta-D-ribosylamino)methylideneamino]imidazole-4-carboxamide. It functions in the pathway amino-acid biosynthesis; L-histidine biosynthesis; L-histidine from 5-phospho-alpha-D-ribose 1-diphosphate: step 3/9. Catalyzes the hydrolysis of the adenine ring of phosphoribosyl-AMP. This chain is Phosphoribosyl-AMP cyclohydrolase, found in Chlorobium chlorochromatii (strain CaD3).